A 190-amino-acid polypeptide reads, in one-letter code: Ganglioside GM2 activator (190 aa).

An N-terminal signal peptide occupies residues 1–23 (MQSLMQAPVLIALGLLFAAPAQA). Cystine bridges form between Cys36–Cys180, Cys96–Cys103, Cys109–Cys135, and Cys122–Cys133. Asn60 carries N-linked (GlcNAc...) asparagine glycosylation.

Its subcellular location is the lysosome. The catalysed reaction is cholesterol(in) = cholesterol(out). Its function is as follows. The large binding pocket can accommodate several single chain phospholipids and fatty acids, GM2A also exhibits some calcium-independent phospholipase activity. Binds gangliosides and stimulates ganglioside GM2 degradation. It stimulates only the breakdown of ganglioside GM2 and glycolipid GA2 by beta-hexosaminidase A. It extracts single GM2 molecules from membranes and presents them in soluble form to beta-hexosaminidase A for cleavage of N-acetyl-D-galactosamine and conversion to GM3. Has cholesterol transfer activity. The sequence is that of Ganglioside GM2 activator (GM2A) from Macaca fascicularis (Crab-eating macaque).